A 489-amino-acid polypeptide reads, in one-letter code: UDP-N-acetylmuramate--L-alanine ligase (489 aa).

Residue 128–134 coordinates ATP; that stretch reads GTHGKTT.

Belongs to the MurCDEF family.

The protein localises to the cytoplasm. It carries out the reaction UDP-N-acetyl-alpha-D-muramate + L-alanine + ATP = UDP-N-acetyl-alpha-D-muramoyl-L-alanine + ADP + phosphate + H(+). The protein operates within cell wall biogenesis; peptidoglycan biosynthesis. Cell wall formation. The protein is UDP-N-acetylmuramate--L-alanine ligase of Shewanella halifaxensis (strain HAW-EB4).